Here is a 194-residue protein sequence, read N- to C-terminus: MGEIAQPAFFESKLKQIVYCGVCTLPPEYCEFGGTAKKCEEWLKDNHEETYQRLYSEEALSSNLSTLSVSVRERAAKDAAKKEAKAALAEARDAERKAAAKVQIKRVERNKRKHVTVITGLEVHGLENKKVAKELGKKFATGSSVTKSPAGVEEITVQGDVSEDVQEWLLEVYGKELPESNIELVEDKKKKSSS.

Positions 102-173 (VQIKRVERNK…DVQEWLLEVY (72 aa)) constitute an SUI1 domain.

Belongs to the DENR family. In terms of assembly, interacts with the 40S ribosomal subunit.

Its subcellular location is the cytoplasm. The chain is Translation machinery-associated protein 22 (tma22) from Aspergillus clavatus (strain ATCC 1007 / CBS 513.65 / DSM 816 / NCTC 3887 / NRRL 1 / QM 1276 / 107).